We begin with the raw amino-acid sequence, 179 residues long: Large ribosomal subunit protein uL5 (179 aa).

The protein belongs to the universal ribosomal protein uL5 family. As to quaternary structure, part of the 50S ribosomal subunit; part of the 5S rRNA/L5/L18/L25 subcomplex. Contacts the 5S rRNA and the P site tRNA. Forms a bridge to the 30S subunit in the 70S ribosome.

Functionally, this is one of the proteins that bind and probably mediate the attachment of the 5S RNA into the large ribosomal subunit, where it forms part of the central protuberance. In the 70S ribosome it contacts protein S13 of the 30S subunit (bridge B1b), connecting the 2 subunits; this bridge is implicated in subunit movement. Contacts the P site tRNA; the 5S rRNA and some of its associated proteins might help stabilize positioning of ribosome-bound tRNAs. The polypeptide is Large ribosomal subunit protein uL5 (Microcystis aeruginosa (strain NIES-843 / IAM M-2473)).